Consider the following 2134-residue polypeptide: Genome polyprotein (2134 aa).

Over 1 to 1377 (MSKLFSTVGK…WLFEKIKTSK (1377 aa)) the chain is Cytoplasmic. In terms of domain architecture, LRAT spans 781–882 (IVSCSGEKAK…GDYGTKEGEK (102 aa)). Catalysis depends on residues H791 and H802. C863 acts as the Acyl-thioester intermediate in catalysis. The region spanning 1127-1289 (LNKLGRLDKP…EEFSTHAMLD (163 aa)) is the SF3 helicase domain. 1153–1160 (GNRGGGKS) is an ATP binding site. An intramembrane segment occupies 1378-1392 (WYILGCVGAVLSVSV). The Cytoplasmic segment spans residues 1393 to 2134 (LGVFAYHMIK…VKYRFIDDSF (742 aa)). Residue Y1415 is modified to O-(5'-phospho-RNA)-tyrosine. The region spanning 1431 to 1643 (DAQSVVDISN…ITKEMIEEML (213 aa)) is the Peptidase C3 domain. Residues H1477, D1515, and C1603 each act as for protease 3C activity in the active site. Residues 1880–2001 (DLVVGLDFSN…CIKKEYLDQK (122 aa)) form the RdRp catalytic domain.

This sequence belongs to the picornaviridae polyprotein family. In terms of processing, specific enzymatic cleavages by the viral protease in vivo yield a variety of precursors and mature proteins. During virion maturation, non-infectious particles are rendered infectious following cleavage of VP0. This maturation cleavage is followed by a conformational change of the particle. Post-translationally, VPg is uridylylated by the polymerase and is covalently linked to the 5'-end of genomic RNA. This uridylylated form acts as a nucleotide-peptide primer for the polymerase.

It localises to the virion. It is found in the host cytoplasm. Its subcellular location is the host cytoplasmic vesicle membrane. The catalysed reaction is RNA(n) + a ribonucleoside 5'-triphosphate = RNA(n+1) + diphosphate. It carries out the reaction a ribonucleoside 5'-triphosphate + H2O = a ribonucleoside 5'-diphosphate + phosphate + H(+). It catalyses the reaction Selective cleavage of Gln-|-Gly bond in the poliovirus polyprotein. In other picornavirus reactions Glu may be substituted for Gln, and Ser or Thr for Gly.. In terms of biological role, capsid proteins VP1, VP2, and VP3 form a closed capsid enclosing the viral positive strand RNA genome. All these proteins contain a beta-sheet structure called beta-barrel jelly roll. Together they form an icosahedral capsid (T=3) composed of 60 copies of each VP1, VP2, and VP3, with a diameter of approximately 300 Angstroms. VP1 is situated at the 12 fivefold axes, whereas VP2 and VP3 are located at the quasi-sixfold axes. VP0 precursor is a component of immature procapsids. The N-terminal domain of VP0, protein VP4, is needed for the assembly of 12 pentamers into the icosahedral structure. Unlike other picornaviruses, AEV VP4 may not be myristoylated. Functionally, protein 2B and 2BC precursor affect membrane integrity and cause an increase in membrane permeability. Its function is as follows. Associates with and induces structural rearrangements of intracellular membranes. It displays RNA-binding, nucleotide binding and NTPase activities. In terms of biological role, protein 3A, via its hydrophobic domain, serves as membrane anchor. Protein 3B is covalently linked to the 5'-end of both the positive-strand and negative-strand genomic RNAs. It acts as a genome-linked replication primer. Functionally, cysteine protease that generates mature viral proteins from the precursor polyprotein. In addition to its proteolytic activity, it binds to viral RNA, and thus influences viral genome replication. RNA and substrate bind cooperatively to the protease. Its function is as follows. RNA-directed RNA polymerase 3D-POL replicates genomic and antigenomic RNA by recognizing replications specific signals. The sequence is that of Genome polyprotein from Avian encephalomyelitis virus (strain Calnek vaccine) (AEV).